Consider the following 251-residue polypeptide: Pyridoxine 5'-phosphate synthase (251 aa).

N7 provides a ligand contact to 3-amino-2-oxopropyl phosphate. 9–10 (DH) lines the 1-deoxy-D-xylulose 5-phosphate pocket. Residue R18 coordinates 3-amino-2-oxopropyl phosphate. Catalysis depends on H43, which acts as the Proton acceptor. 1-deoxy-D-xylulose 5-phosphate is bound by residues R45 and H50. The Proton acceptor role is filled by E70. T100 provides a ligand contact to 1-deoxy-D-xylulose 5-phosphate. H198 acts as the Proton donor in catalysis. 3-amino-2-oxopropyl phosphate-binding positions include A199 and 220 to 221 (GH).

The protein belongs to the PNP synthase family. In terms of assembly, homooctamer; tetramer of dimers.

It is found in the cytoplasm. It catalyses the reaction 3-amino-2-oxopropyl phosphate + 1-deoxy-D-xylulose 5-phosphate = pyridoxine 5'-phosphate + phosphate + 2 H2O + H(+). It participates in cofactor biosynthesis; pyridoxine 5'-phosphate biosynthesis; pyridoxine 5'-phosphate from D-erythrose 4-phosphate: step 5/5. In terms of biological role, catalyzes the complicated ring closure reaction between the two acyclic compounds 1-deoxy-D-xylulose-5-phosphate (DXP) and 3-amino-2-oxopropyl phosphate (1-amino-acetone-3-phosphate or AAP) to form pyridoxine 5'-phosphate (PNP) and inorganic phosphate. The protein is Pyridoxine 5'-phosphate synthase of Dechloromonas aromatica (strain RCB).